Reading from the N-terminus, the 100-residue chain is MAKKSLIEREKKRKILVQKYKFIRQSLKNEIKDASSLEEILAIHKELQSLPRNSAPTRLHRRCFLTGRPRSNYRDFGLSRHVLREMAHTCLLPGVTKSSW.

This sequence belongs to the universal ribosomal protein uS14 family. In terms of assembly, part of the 30S ribosomal subunit.

It localises to the plastid. The protein localises to the chloroplast. Functionally, binds 16S rRNA, required for the assembly of 30S particles. The chain is Small ribosomal subunit protein uS14c from Angiopteris evecta (Mule's foot fern).